The sequence spans 160 residues: Endoribonuclease YbeY (160 aa).

3 residues coordinate Zn(2+): His-112, His-116, and His-122. The tract at residues 141–160 is disordered; sequence ELGHPDPYACDDEEPPSKEK.

The protein belongs to the endoribonuclease YbeY family. Zn(2+) serves as cofactor.

It localises to the cytoplasm. Its function is as follows. Single strand-specific metallo-endoribonuclease involved in late-stage 70S ribosome quality control and in maturation of the 3' terminus of the 16S rRNA. The protein is Endoribonuclease YbeY of Pseudomonas aeruginosa (strain UCBPP-PA14).